A 506-amino-acid chain; its full sequence is Lysine--tRNA ligase (506 aa).

Positions 416 and 423 each coordinate Mg(2+).

It belongs to the class-II aminoacyl-tRNA synthetase family. Homodimer. Mg(2+) serves as cofactor.

The protein localises to the cytoplasm. It carries out the reaction tRNA(Lys) + L-lysine + ATP = L-lysyl-tRNA(Lys) + AMP + diphosphate. The chain is Lysine--tRNA ligase (lysS) from Xylella fastidiosa (strain 9a5c).